A 973-amino-acid polypeptide reads, in one-letter code: Peptidyl-glycine alpha-amidating monooxygenase (973 aa).

A signal peptide spans 1–20 (MAGRVPSLLVLLVFPSSCLA). The tract at residues 1-494 (MAGRVPSLLV…EGTWEPEHTG (494 aa)) is peptidylglycine alpha-hydroxylating monooxygenase. A propeptide spanning residues 21–30 (FRSPLSVFKR) is cleaved from the precursor. Topologically, residues 31–863 (FKETTRPFSN…QKLIKEPGSG (833 aa)) are intragranular. 5 cysteine pairs are disulfide-bonded: C42/C181, C76/C121, C109/C126, C222/C329, and C288/C310. The Cu(2+) site is built by H102 and H103. H167, H237, H239, and M309 together coordinate Cu(2+). Residues 495–817 (DFHMEEALDW…LTEKLEHRSV (323 aa)) form a peptidyl-alpha-hydroxyglycine alpha-amidating lyase region. NHL repeat units follow at residues 498 to 541 (MEEA…NSFD), 567 to 608 (AAVL…LDPN), 617 to 662 (LGRS…FSPS), and 670 to 714 (GEES…FKTD). V517 is a Ca(2+) binding site. R530 is a binding site for a protein. H582 provides a ligand contact to Zn(2+). A Ca(2+)-binding site is contributed by L584. C631 and C652 are joined by a disulfide. Y651 contacts a protein. Zn(2+) is bound at residue H687. A disulfide bridge connects residues C699 and C710. R703 serves as a coordination point for a protein. N762 is a glycosylation site (N-linked (GlcNAc...) asparagine). The NHL 5 repeat unit spans residues 766–809 (GEIIDIFKPVRKHFDMPHDIVASEDGTVYIGDAHTNTVWKFTLT). Position 783 (H783) interacts with Zn(2+). Position 784 (D784) interacts with Ca(2+). A helical membrane pass occupies residues 864–887 (VPVVLITTLLVIPVVVLLAIAIFI). A sulfotyrosine mark is found at I875 and R893. Over 888 to 973 (RWKKSRAFGD…PLPALAPSSS (86 aa)) the chain is Cytoplasmic. 3 positions are modified to phosphoserine: S918, S929, and S942. The interaction with RASSF9 stretch occupies residues 925 to 942 (NFFASRKGYSRKGFDRLS). The segment at 937–973 (GFDRLSTEGSDQEKEDDGSESEEEYSAPLPALAPSSS) is disordered. A Phosphothreonine modification is found at T943. The residue at position 946 (S946) is a Phosphoserine; by UHMK1; in vitro. The segment covering 949–961 (EKEDDGSESEEEY) has biased composition (acidic residues). At S957 the chain carries Phosphoserine. A compositionally biased stretch (low complexity) spans 962–973 (SAPLPALAPSSS).

It in the C-terminal section; belongs to the peptidyl-alpha-hydroxyglycine alpha-amidating lyase family. The protein in the N-terminal section; belongs to the copper type II ascorbate-dependent monooxygenase family. In terms of assembly, monomer. Interacts with RASSF9. Requires Zn(2+) as cofactor. The cofactor is Cu(2+).

The protein resides in the cytoplasmic vesicle. Its subcellular location is the secretory vesicle membrane. It is found in the membrane. The protein localises to the secreted. The enzyme catalyses a [peptide]-C-terminal glycine + 2 L-ascorbate + O2 = a [peptide]-C-terminal (2S)-2-hydroxyglycine + 2 monodehydro-L-ascorbate radical + H2O. It catalyses the reaction a [peptide]-C-terminal (2S)-2-hydroxyglycine = a [peptide]-C-terminal amide + glyoxylate. It carries out the reaction N-dodecanoylglycine + 2 L-ascorbate + O2 = N-dodecanoyl-(2S)-hydroxyglycine + 2 monodehydro-L-ascorbate radical + H2O. The catalysed reaction is N-dodecanoyl-(2S)-hydroxyglycine = dodecanamide + glyoxylate. The enzyme catalyses N-(9Z,12Z,15Z)-octadecatrienoylglycine + 2 L-ascorbate + O2 = N-(9Z,12Z,15Z)-octadecatrienoyl-(2S)-hydroxyglycine + 2 monodehydro-L-ascorbate radical + H2O. It catalyses the reaction N-(9Z,12Z,15Z)-octadecatrienoyl-(2S)-hydroxyglycine = (9Z,12Z,15Z)-octadecatrienamide + glyoxylate. It carries out the reaction N-(9Z-octadecenoyl)glycine + 2 L-ascorbate + O2 = N-(9Z-octadecenoyl)-(2S)-hydroxyglycine + 2 monodehydro-L-ascorbate radical + H2O. The catalysed reaction is N-(9Z-octadecenoyl)-(2S)-hydroxyglycine = (9Z)-octadecenamide + glyoxylate. The enzyme catalyses N-tetradecanoylglycine + 2 L-ascorbate + O2 = N-tetradecanoyl-(2S)-hydroxyglycine + 2 monodehydro-L-ascorbate radical + H2O. It catalyses the reaction N-tetradecanoyl-(2S)-hydroxyglycine = tetradecamide + glyoxylate. It carries out the reaction N-decanoylglycine + 2 L-ascorbate + O2 = N-decanoyl-(2S)-hydroxyglycine + 2 monodehydro-L-ascorbate radical + H2O. The catalysed reaction is N-decanoyl-(2S)-hydroxyglycine = decanamide + glyoxylate. The enzyme catalyses N-octanoylglycine + 2 L-ascorbate + O2 = N-octanoyl-(2S)-hydroxyglycine + 2 monodehydro-L-ascorbate radical + H2O. It catalyses the reaction N-octanoyl-(2S)-hydroxyglycine = octanamide + glyoxylate. PAM activity is inhibited by EDTA, phenylglyoxal and diethyl pyrocarbonate. PAL activity is stimulated by cadmium and inhibited by mercury. Functionally, bifunctional enzyme that catalyzes amidation of the C-terminus of proteins. Alpha-amidation is present at the C-terminus of many endocrine hormones and neuropeptides and is required for their activity. C-terminal amidation also takes place in response to protein fragmentation triggered by oxidative stress, promoting degradation of amidated protein fragments by the proteasome. Alpha-amidation involves two sequential reactions, both of which are catalyzed by separate catalytic domains of the enzyme. The first step, catalyzed by peptidyl alpha-hydroxylating monooxygenase (PHM) domain, is the copper-, ascorbate-, and O2- dependent stereospecific hydroxylation (with S stereochemistry) at the alpha-carbon (C-alpha) of the C-terminal glycine of the peptidylglycine substrate. The second step, catalyzed by the peptidylglycine amidoglycolate lyase (PAL) domain, is the zinc-dependent cleavage of the N-C-alpha bond, producing the alpha-amidated peptide and glyoxylate. Similarly, catalyzes the two-step conversion of an N-fatty acylglycine to a primary fatty acid amide and glyoxylate. This chain is Peptidyl-glycine alpha-amidating monooxygenase, found in Homo sapiens (Human).